Reading from the N-terminus, the 494-residue chain is Membrane-bound lytic murein transglycosylase F 1 (494 aa).

The signal sequence occupies residues 1–24 (MRIMAVRLVAGAITLALMAYAWLA). Positions 25 to 270 (WERARDPEPI…TLLEEHFGHL (246 aa)) are non-LT domain. Positions 271–494 (GRFDYVGFRA…APLPADPPAD (224 aa)) are LT domain. Glu317 is an active-site residue. The tract at residues 464 to 494 (QVPAGEALGEPPLPTPPAPPGAPLPADPPAD) is disordered. Residues 474–494 (PPLPTPPAPPGAPLPADPPAD) show a composition bias toward pro residues.

It in the N-terminal section; belongs to the bacterial solute-binding protein 3 family. In the C-terminal section; belongs to the transglycosylase Slt family.

It is found in the cell outer membrane. It catalyses the reaction Exolytic cleavage of the (1-&gt;4)-beta-glycosidic linkage between N-acetylmuramic acid (MurNAc) and N-acetylglucosamine (GlcNAc) residues in peptidoglycan, from either the reducing or the non-reducing ends of the peptidoglycan chains, with concomitant formation of a 1,6-anhydrobond in the MurNAc residue.. Its function is as follows. Murein-degrading enzyme that degrades murein glycan strands and insoluble, high-molecular weight murein sacculi, with the concomitant formation of a 1,6-anhydromuramoyl product. Lytic transglycosylases (LTs) play an integral role in the metabolism of the peptidoglycan (PG) sacculus. Their lytic action creates space within the PG sacculus to allow for its expansion as well as for the insertion of various structures such as secretion systems and flagella. The chain is Membrane-bound lytic murein transglycosylase F 1 from Alkalilimnicola ehrlichii (strain ATCC BAA-1101 / DSM 17681 / MLHE-1).